The sequence spans 93 residues: Small ribosomal subunit protein bS6 (93 aa).

The protein belongs to the bacterial ribosomal protein bS6 family.

In terms of biological role, binds together with bS18 to 16S ribosomal RNA. The chain is Small ribosomal subunit protein bS6 from Treponema denticola (strain ATCC 35405 / DSM 14222 / CIP 103919 / JCM 8153 / KCTC 15104).